The chain runs to 139 residues: Cuticle protein 76 (139 aa).

Tandem repeats lie at residues 7–10 (AAPA), 68–71 (AAPA), 75–78 (AAPV), 93–95 (AAP), 105–108 (AAPA), and 121–124 (AAPA).

Its function is as follows. Component of the cuticle of migratory locust which contains more than 100 different structural proteins. This is Cuticle protein 76 from Locusta migratoria (Migratory locust).